The chain runs to 313 residues: MTSCHVAEDPIKKVAIFGGTHGNELTGVFLVKHWLENSTEIQRTGLEVKPFITNPRAVKKCTRYIDCDLNRVFDPENLGKKKSEDLPYEVRRAQEINHLFGPKDSEDSYDIIFDLHNTTSNMGCTLILEDSRNDFLIQMFHYIKTSLAPLPCYVYLIEHPSLKYATTRSIAKYPVGIEVGPQPQGVLRADILDQMRKMIQHALDFIHNFNEGKEFPPCAIEVYKIMRKVDYPRNESGEISAIIHPKLQDQDWKPLHPEDPVFLTLDGKTIPLGGDQTVYPVFVNEAAYYEKKEAFAKTTKLTLNANSIRSSLH.

H21 and E24 together coordinate Zn(2+). Positions 63, 70, and 71 each coordinate N-acetyl-L-aspartate. Residue H116 participates in Zn(2+) binding. N-acetyl-L-aspartate contacts are provided by Y164 and R168. The active-site Proton donor/acceptor is E178. Y288 provides a ligand contact to N-acetyl-L-aspartate.

This sequence belongs to the AspA/AstE family. Aspartoacylase subfamily. As to quaternary structure, homodimer. The cofactor is Zn(2+).

It localises to the cytoplasm. The protein localises to the nucleus. It catalyses the reaction an N-acyl-L-aspartate + H2O = a carboxylate + L-aspartate. The enzyme catalyses N-acetyl-L-aspartate + H2O = L-aspartate + acetate. In terms of biological role, catalyzes the deacetylation of N-acetylaspartic acid (NAA) to produce acetate and L-aspartate. NAA occurs in high concentration in brain and its hydrolysis NAA plays a significant part in the maintenance of intact white matter. In other tissues it acts as a scavenger of NAA from body fluids. The sequence is that of Aspartoacylase (ASPA) from Bos taurus (Bovine).